A 908-amino-acid polypeptide reads, in one-letter code: Vacuolar membrane protease (908 aa).

The tract at residues 1-25 (MTSGEEEEGTREQVPVSQPTGTTSI) is disordered. The Cytoplasmic segment spans residues 1–48 (MTSGEEEEGTREQVPVSQPTGTTSIVSTKEKQPNIFIRAIRATFGYRK). Over residues 15 to 25 (PVSQPTGTTSI) the composition is skewed to polar residues. Residues 49-69 (TSLTLFVLLTIFFTVAFSSYD) form a helical membrane-spanning segment. Residues 70–381 (NSLDFTIDLP…FSTSVTTLNT (312 aa)) lie on the Vacuolar side of the membrane. N-linked (GlcNAc...) asparagine glycans are attached at residues Asn143 and Asn162. Positions 176 and 188 each coordinate Zn(2+). Glu221 serves as the catalytic Proton acceptor. Residues Glu222, Glu247, and His319 each contribute to the Zn(2+) site. A glycan (N-linked (GlcNAc...) asparagine) is linked at Asn354. The helical transmembrane segment at 382-402 (INMVLIVLFPVLSGPLLFITV) threads the bilayer. The Cytoplasmic segment spans residues 403–411 (RYKKWNIGT). The chain crosses the membrane as a helical span at residues 412 to 432 (ANLFSLPLAIVITSLVGAVVV). Topologically, residues 433 to 449 (NQGFRLVNEFLPASRPM) are vacuolar. A helical membrane pass occupies residues 450–470 (LLVTTTTSILLLTYYILLNGI). At 471 to 480 (NFVSPSGDQK) the chain is on the cytoplasmic side. A helical membrane pass occupies residues 481 to 501 (LVSIIQISFIYWIALIFVTRG). Over 502–514 (LSQNAIGDDHTGE) the chain is Vacuolar. The helical transmembrane segment at 515–535 (FAFTILFLLEATASLFGLIGW) threads the bilayer. The Cytoplasmic segment spans residues 536–602 (TFTRSVKEPT…MQHFGYDWSL (67 aa)). Residues 543 to 584 (EPTGDEEPLLNGRMERYVDGSDDEDDVEEEDDEDQSEEENHQ) are disordered. Residues 562-579 (GSDDEDDVEEEDDEDQSE) show a composition bias toward acidic residues. A helical transmembrane segment spans residues 603-623 (QFLLIVPISSLVIYNSGWLVI). The Vacuolar segment spans residues 624-638 (DGINKSIQESLVAEN). Residue Asn627 is glycosylated (N-linked (GlcNAc...) asparagine). The chain crosses the membrane as a helical span at residues 639-659 (FIYLIIQLFSQFWILPILPFV). Residues 660–664 (YKLNR) lie on the Cytoplasmic side of the membrane. The helical transmembrane segment at 665-685 (FMVLGLIAFALVGVTLISSVD) threads the bilayer. Residues 686 to 908 (PFNQDNPLKL…LVSLTNRIEV (223 aa)) lie on the Vacuolar side of the membrane. N-linked (GlcNAc...) asparagine glycosylation is found at Asn752 and Asn764.

This sequence belongs to the peptidase M28 family. The cofactor is Zn(2+).

It localises to the vacuole membrane. In terms of biological role, may be involved in vacuolar sorting and osmoregulation. This is Vacuolar membrane protease from Candida tropicalis (strain ATCC MYA-3404 / T1) (Yeast).